We begin with the raw amino-acid sequence, 238 residues long: Phosphoribosylaminoimidazole-succinocarboxamide synthase (238 aa).

This sequence belongs to the SAICAR synthetase family.

The catalysed reaction is 5-amino-1-(5-phospho-D-ribosyl)imidazole-4-carboxylate + L-aspartate + ATP = (2S)-2-[5-amino-1-(5-phospho-beta-D-ribosyl)imidazole-4-carboxamido]succinate + ADP + phosphate + 2 H(+). The protein operates within purine metabolism; IMP biosynthesis via de novo pathway; 5-amino-1-(5-phospho-D-ribosyl)imidazole-4-carboxamide from 5-amino-1-(5-phospho-D-ribosyl)imidazole-4-carboxylate: step 1/2. This is Phosphoribosylaminoimidazole-succinocarboxamide synthase from Persephonella marina (strain DSM 14350 / EX-H1).